Consider the following 49-residue polypeptide: Large ribosomal subunit protein bL33 (49 aa).

The protein belongs to the bacterial ribosomal protein bL33 family.

The sequence is that of Large ribosomal subunit protein bL33 from Clostridioides difficile (strain 630) (Peptoclostridium difficile).